The chain runs to 340 residues: Phosphoribosylformylglycinamidine cyclo-ligase (340 aa).

It belongs to the AIR synthase family.

The protein localises to the cytoplasm. The catalysed reaction is 2-formamido-N(1)-(5-O-phospho-beta-D-ribosyl)acetamidine + ATP = 5-amino-1-(5-phospho-beta-D-ribosyl)imidazole + ADP + phosphate + H(+). It participates in purine metabolism; IMP biosynthesis via de novo pathway; 5-amino-1-(5-phospho-D-ribosyl)imidazole from N(2)-formyl-N(1)-(5-phospho-D-ribosyl)glycinamide: step 2/2. This is Phosphoribosylformylglycinamidine cyclo-ligase from Streptococcus pneumoniae serotype 2 (strain D39 / NCTC 7466).